Here is a 506-residue protein sequence, read N- to C-terminus: MAAAGEVVMLGGILLPLLLVVAVSGEPPPISRRSFPEGFIFGTASSSYQYEGGAREGGRGPSIWDTFTHQHPDKIADKSNGDVAADSYHLYKEDVRIMKDMGVDAYRFSISWTRILPNGSLSGGINREGISYYNNLINELLLKGVQPFVTLFHWDSPQALEDKYNGFLSPNIINDYKEYAETCFKEFGDRVKHWITFNEPLSFCVAGYASGGMFAPGRCSPWEGNCSAGDSGREPYTACHHQLLAHAETVRLYKEKYQVLQKGKIGITLVSNWFVPFSRSKSNIDAARRALDFMLGWFMDPLIRGEYPLSMRELVRNRLPQFTKEQSELIKGSFDFIGLNYYTSNYAGSLPPSNGLNNSYSTDARANLTAVRNGIPIGPQAASPWLYIYPQGFRELVLYVKENYGNPTIYITENGVDEFNNKTLPLQEALKDDTRIDYYHKHLLSLLSAIRDGANVKGYFAWSLLDNFEWSNGYTVRFGINFVDYNDGAKRYPKMSAHWFKEFLQK.

The N-terminal stretch at 1 to 25 (MAAAGEVVMLGGILLPLLLVVAVSG) is a signal peptide. A beta-D-glucoside is bound at residue glutamine 49. N-linked (GlcNAc...) asparagine glycosylation is present at asparagine 118. Residues histidine 153 and 198–199 (NE) contribute to the a beta-D-glucoside site. Glutamate 199 (proton donor) is an active-site residue. A disulfide bridge links cysteine 219 with cysteine 226. The N-linked (GlcNAc...) asparagine glycan is linked to asparagine 225. Tyrosine 342 contributes to the a beta-D-glucoside binding site. Residues asparagine 357 and asparagine 367 are each glycosylated (N-linked (GlcNAc...) asparagine). An a beta-D-glucoside-binding site is contributed by glutamate 413. Glutamate 413 acts as the Nucleophile in catalysis. Residue asparagine 421 is glycosylated (N-linked (GlcNAc...) asparagine). A beta-D-glucoside-binding positions include tryptophan 462, 469 to 470 (EW), and phenylalanine 478.

The protein belongs to the glycosyl hydrolase 1 family.

It carries out the reaction Hydrolysis of terminal, non-reducing beta-D-glucosyl residues with release of beta-D-glucose.. The chain is Beta-glucosidase 13 (BGLU13) from Oryza sativa subsp. japonica (Rice).